We begin with the raw amino-acid sequence, 572 residues long: Oxygen-dependent choline dehydrogenase (572 aa).

9-38 (DYVIIGGGSAGSVLGARLSEDKDKNVLVLE) contributes to the FAD binding site. His477 acts as the Proton acceptor in catalysis.

It belongs to the GMC oxidoreductase family. It depends on FAD as a cofactor.

The enzyme catalyses choline + A = betaine aldehyde + AH2. The catalysed reaction is betaine aldehyde + NAD(+) + H2O = glycine betaine + NADH + 2 H(+). Its pathway is amine and polyamine biosynthesis; betaine biosynthesis via choline pathway; betaine aldehyde from choline (cytochrome c reductase route): step 1/1. Its function is as follows. Involved in the biosynthesis of the osmoprotectant glycine betaine. Catalyzes the oxidation of choline to betaine aldehyde and betaine aldehyde to glycine betaine at the same rate. This chain is Oxygen-dependent choline dehydrogenase, found in Staphylococcus epidermidis (strain ATCC 35984 / DSM 28319 / BCRC 17069 / CCUG 31568 / BM 3577 / RP62A).